A 191-amino-acid chain; its full sequence is Potassium-transporting ATPase KdpC subunit (191 aa).

A helical membrane pass occupies residues 11 to 31 (LFVLLTAVTGVVYPLAVTGIA).

Belongs to the KdpC family. As to quaternary structure, the system is composed of three essential subunits: KdpA, KdpB and KdpC.

It is found in the cell inner membrane. Its function is as follows. Part of the high-affinity ATP-driven potassium transport (or Kdp) system, which catalyzes the hydrolysis of ATP coupled with the electrogenic transport of potassium into the cytoplasm. This subunit acts as a catalytic chaperone that increases the ATP-binding affinity of the ATP-hydrolyzing subunit KdpB by the formation of a transient KdpB/KdpC/ATP ternary complex. The protein is Potassium-transporting ATPase KdpC subunit of Dechloromonas aromatica (strain RCB).